The chain runs to 252 residues: MSGHTKWHEIRRKKGVLDQRRGQRWTKIARDITIAAREGGGSPDMNFRLRLAIEKAKADNMPADNIQRAIDRGTGVSGEAALEEVTYEGYGPGGIAVIVDAATDNRNRTVSEIRTAFNKNGGTLGEGGSVGWMFDIKGLISIDRTEKTDPDEVTLLAIDADADDVIVNDDAIIVYTEFSKLAAVRDALNEQGLKISTAEKTMLAKTIMEADEATTFQILRLMERLEDLDDVQKVYSNLEVSDELAEKYAEQG.

The protein belongs to the TACO1 family.

The protein resides in the cytoplasm. This is Probable transcriptional regulatory protein Haur_3030 from Herpetosiphon aurantiacus (strain ATCC 23779 / DSM 785 / 114-95).